The following is a 529-amino-acid chain: ATP synthase F(1) complex catalytic subunit beta, mitochondrial (529 aa).

The N-terminal 46 residues, 1–46 (MLSLVGRVASASASGALRGLNPLAALPQAHLLLRTAPAGVHPARDY), are a transit peptide targeting the mitochondrion. O-linked (GlcNAc) serine glycosylation occurs at Ser-106. Lys-124, Lys-133, and Lys-161 each carry N6-acetyllysine; alternate. An N6-succinyllysine; alternate mark is found at Lys-124, Lys-133, and Lys-161. Lys-198 is subject to N6-acetyllysine. Gly-209, Val-210, Gly-211, Lys-212, Thr-213, and Val-214 together coordinate ADP. Gly-209 contributes to the ATP binding site. Gly-209, Val-210, Gly-211, Lys-212, and Thr-213 together coordinate phosphate. The ATP site is built by Gly-211, Lys-212, Thr-213, and Val-214. Residue Thr-213 participates in Mg(2+) binding. Residue Glu-238 participates in Mg(2+) binding. Residue Arg-239 participates in ATP binding. An N6-acetyllysine; alternate mark is found at Lys-259 and Lys-264. 2 positions are modified to N6-succinyllysine; alternate: Lys-259 and Lys-264. The residue at position 312 (Thr-312) is a Phosphothreonine. Ser-415 carries the phosphoserine modification. Lys-426 is subject to N6-acetyllysine. Ser-433 is modified (phosphoserine). N6-acetyllysine occurs at positions 480 and 485. An N6-acetyllysine; alternate modification is found at Lys-522. Lys-522 bears the N6-succinyllysine; alternate mark. A Phosphoserine modification is found at Ser-529.

This sequence belongs to the ATPase alpha/beta chains family. In terms of assembly, homotrimer. Component of the ATP synthase complex composed at least of ATP5F1A/subunit alpha, ATP5F1B/subunit beta, ATP5MC1/subunit c (homooctomer), MT-ATP6/subunit a, MT-ATP8/subunit 8, ATP5ME/subunit e, ATP5MF/subunit f, ATP5MG/subunit g, ATP5MK/subunit k, ATP5MJ/subunit j, ATP5F1C/subunit gamma, ATP5F1D/subunit delta, ATP5F1E/subunit epsilon, ATP5PF/subunit F6, ATP5PB/subunit b, ATP5PD/subunit d, ATP5PO/subunit OSCP. ATP synthase complex consists of a soluble F(1) head domain (subunits alpha(3) and beta(3)) - the catalytic core - and a membrane F(0) domain - the membrane proton channel (subunits c, a, 8, e, f, g, k and j). These two domains are linked by a central stalk (subunits gamma, delta, and epsilon) rotating inside the F1 region and a stationary peripheral stalk (subunits F6, b, d, and OSCP). Interacts with PPIF. Interacts with BCL2L1 isoform BCL-X(L); the interaction mediates the association of BCL2L1 isoform BCL-X(L) with the mitochondrial membrane F(1)F(0) ATP synthase and enhances neurons metabolic efficiency. Interacts with CLN5 and PPT1. Interacts with S100A1; this interaction increases F1-ATPase activity. Interacts with MTLN. Interacts with TTC5/STRAP; the interaction results in decreased mitochondrial ATP production.

It is found in the mitochondrion inner membrane. The catalysed reaction is ATP + H2O + 4 H(+)(in) = ADP + phosphate + 5 H(+)(out). In terms of biological role, catalytic subunit beta, of the soluble F(1) head domain within the mitochondrial ATP synthase complex (F(1)F(0) ATP synthase or complex V) that produces ATP from ADP and phosphate inorganique in the presence of a proton gradient across the membrane which is generated by electron transport complexes of the respiratory chain. With the non-catalytic subunit alpha (ATP5F1A), forms the catalytic core in the F(1) domain. ATP synthase complex consist of two structural domains, F(1) - containing the extramembraneous catalytic core, and F(0) - containing the membrane proton channel, linked together by a central stalk and a peripheral stalk. During catalysis, ATP synthesis in the catalytic domain of F(1) is coupled via a rotary mechanism of the central stalk subunits to proton translocation. Catalytic subunit beta, of the mitochondrial membrane ATP synthase complex (F(1)F(0) ATP synthase or Complex V) that produces ATP from ADP in the presence of a proton gradient across the membrane which is generated by electron transport complexes of the respiratory chain. ATP synthase complex consist of a soluble F(1) head domain - the catalytic core - and a membrane F(1) domain - the membrane proton channel. These two domains are linked by a central stalk rotating inside the F(1) region and a stationary peripheral stalk. During catalysis, ATP synthesis in the catalytic domain of F(1) is coupled via a rotary mechanism of the central stalk subunits to proton translocation. In vivo, can only synthesize ATP although its ATP hydrolase activity can be activated artificially in vitro. With the subunit alpha (ATP5F1A), forms the catalytic core in the F(1) domain. The polypeptide is ATP synthase F(1) complex catalytic subunit beta, mitochondrial (Rattus norvegicus (Rat)).